We begin with the raw amino-acid sequence, 661 residues long: Sperm transmembrane protein 9 (661 aa).

A signal peptide spans 1–16; the sequence is MNVILVLVVLFFAGDC. Over 17–618 the chain is Extracellular; that stretch reads AKIRKIIDFL…MTNRLMKNYE (602 aa). In terms of domain architecture, EGF-like 1 spans 52–90; sequence NFNPCLENPKICSNRGKCLHENGNFYCICPVTHYGKTCE. 3 disulfide bridges follow: Cys56/Cys69, Cys63/Cys78, and Cys80/Cys89. N-linked (GlcNAc...) asparagine glycosylation is found at Asn105, Asn106, Asn134, and Asn190. The 50-residue stretch at 210–259 folds into the EGF-like 2 domain; that stretch reads QISACFDTQCDNGGICEDVVDWKTKTVTATCKCPSAIELIGGTVTGENCE. 3 cysteine pairs are disulfide-bonded: Cys214/Cys225, Cys219/Cys240, and Cys242/Cys258. Residues Asn279, Asn290, Asn316, and Asn338 are each glycosylated (N-linked (GlcNAc...) asparagine). The short motif at 377-379 is the Cell attachment site element; sequence RGD. EGF-like domains are found at residues 377 to 414, 519 to 557, and 559 to 600; these read RGDR…EKCE, HTNP…SLCE, and VDDS…LDCN. 9 cysteine pairs are disulfide-bonded: Cys385–Cys402, Cys393–Cys404, Cys413–Cys419, Cys523–Cys534, Cys528–Cys545, Cys547–Cys556, Cys563–Cys576, Cys571–Cys588, and Cys590–Cys599. Residue Asn549 is glycosylated (N-linked (GlcNAc...) asparagine). The helical transmembrane segment at 619 to 639 threads the bilayer; that stretch reads FSLPLVACFVSLAILLPVIVI. Residues 640 to 661 are Cytoplasmic-facing; sequence SRRRQGRVEEAKKTSEVKTENP.

As to expression, expressed in spermatids, during spermogenesis expression is primarily localized to the pseudopod.

Its subcellular location is the cytoplasm. The protein resides in the membrane. Its function is as follows. Required for fertilization. May be required for cell adhesion and/or function as a signaling molecule. This Caenorhabditis elegans protein is Sperm transmembrane protein 9 (spe-9).